A 457-amino-acid polypeptide reads, in one-letter code: Phosphomethylpyrimidine synthase (457 aa).

Substrate contacts are provided by residues Asn-80, Met-109, Tyr-139, His-175, 195–197, 236–239, and Glu-275; these read SRG and DSLR. His-279 contributes to the Zn(2+) binding site. Tyr-302 contacts substrate. Zn(2+) is bound at residue His-343. 3 residues coordinate [4Fe-4S] cluster: Cys-423, Cys-426, and Cys-431.

This sequence belongs to the ThiC family. [4Fe-4S] cluster serves as cofactor.

The enzyme catalyses 5-amino-1-(5-phospho-beta-D-ribosyl)imidazole + S-adenosyl-L-methionine = 4-amino-2-methyl-5-(phosphooxymethyl)pyrimidine + CO + 5'-deoxyadenosine + formate + L-methionine + 3 H(+). It functions in the pathway cofactor biosynthesis; thiamine diphosphate biosynthesis. Its function is as follows. Catalyzes the synthesis of the hydroxymethylpyrimidine phosphate (HMP-P) moiety of thiamine from aminoimidazole ribotide (AIR) in a radical S-adenosyl-L-methionine (SAM)-dependent reaction. In Nostoc punctiforme (strain ATCC 29133 / PCC 73102), this protein is Phosphomethylpyrimidine synthase.